The following is a 411-amino-acid chain: Imidazolonepropionase (411 aa).

Fe(3+) is bound by residues His-78 and His-80. His-78 and His-80 together coordinate Zn(2+). 4-imidazolone-5-propanoate is bound by residues Arg-87, Tyr-150, and His-183. Tyr-150 provides a ligand contact to N-formimidoyl-L-glutamate. His-248 provides a ligand contact to Fe(3+). Position 248 (His-248) interacts with Zn(2+). Gln-251 provides a ligand contact to 4-imidazolone-5-propanoate. Asp-322 provides a ligand contact to Fe(3+). Asp-322 contributes to the Zn(2+) binding site. Residues Asn-324 and Gly-326 each coordinate N-formimidoyl-L-glutamate. Residue Ser-327 participates in 4-imidazolone-5-propanoate binding.

It belongs to the metallo-dependent hydrolases superfamily. HutI family. Zn(2+) serves as cofactor. Requires Fe(3+) as cofactor.

The protein localises to the cytoplasm. The catalysed reaction is 4-imidazolone-5-propanoate + H2O = N-formimidoyl-L-glutamate. It participates in amino-acid degradation; L-histidine degradation into L-glutamate; N-formimidoyl-L-glutamate from L-histidine: step 3/3. Functionally, catalyzes the hydrolytic cleavage of the carbon-nitrogen bond in imidazolone-5-propanoate to yield N-formimidoyl-L-glutamate. It is the third step in the universal histidine degradation pathway. The polypeptide is Imidazolonepropionase (Christiangramia forsetii (strain DSM 17595 / CGMCC 1.15422 / KT0803) (Gramella forsetii)).